We begin with the raw amino-acid sequence, 154 residues long: AP-1 complex subunit sigma-3 (154 aa).

It belongs to the adaptor complexes small subunit family. In terms of assembly, adaptor protein complex 1 (AP-1) is a heterotetramer composed of two large adaptins (gamma-type subunit AP1G1 and beta-type subunit AP1B1), a medium adaptin (mu-type subunit AP1M1 or AP1M2) and a small adaptin (sigma-type subunit AP1S1 or AP1S2 or AP1S3). Widely expressed.

The protein localises to the golgi apparatus. It localises to the cytoplasmic vesicle membrane. The protein resides in the membrane. It is found in the clathrin-coated pit. Functionally, subunit of clathrin-associated adaptor protein complex 1 that plays a role in protein sorting in the late-Golgi/trans-Golgi network (TGN) and/or endosomes. The AP complexes mediate both the recruitment of clathrin to membranes and the recognition of sorting signals within the cytosolic tails of transmembrane cargo molecules. Involved in TLR3 trafficking. This chain is AP-1 complex subunit sigma-3 (AP1S3), found in Homo sapiens (Human).